Here is a 293-residue protein sequence, read N- to C-terminus: uncharacterized protein (293 aa).

The region spanning 1-60 (MHITLRQLEVFAEVLKSGSTTQASVMLALSQSAVSAALTDLEGQLGVQLFDRVGKRLVVN) is the HTH lysR-type domain. Positions 20–39 (TTQASVMLALSQSAVSAALT) form a DNA-binding region, H-T-H motif.

The protein belongs to the LysR transcriptional regulatory family.

This is an uncharacterized protein from Escherichia coli O157:H7.